The sequence spans 162 residues: Transcription regulatory protein motB (162 aa).

In terms of assembly, monomer. Homodimer.

Compacts the host nucleoid. Probably dysregulates hundreds of host genes including derepression of most of the H-NS regulon. Plays a role in the transcriptional regulation of middle promoters. The polypeptide is Transcription regulatory protein motB (motB) (Enterobacteria phage T4 (Bacteriophage T4)).